The following is a 113-amino-acid chain: Probable leucocin-A immunity protein (113 aa).

This sequence belongs to the immunity protein EntA family.

Imparts immunity to leucocin-A to naturally sensitive host strains. This chain is Probable leucocin-A immunity protein, found in Leuconostoc gelidum.